We begin with the raw amino-acid sequence, 868 residues long: MAATQEAETATNGAGHTPMMRQFLRIKAEYPETLLFYRMGDFYELFYEDAERAAKLLDITLTTRGESAGAPIPMAGVPVQSVESYLARLVRLGESVAICEQIGDPNTTKGPVERQVVRVVTPGTLTEDALLEERSANLLTAVAPGPKGRFGVASLELSSGRFSVLEAPDQEALTAELERLRPAELILPDDDQTPAPEGGCVAQRRPSWHFEYDSARRLLLRQLGTHDLSGFGAEELHAPVTAAGALLQYLNETQRAALPHVGALTVESRDEAITIDAASRRNLEIEHNLSGGTEHTLASVIDTSVTAMGGRLLRRWLQRPLRRRETIAARHAAVAALADGAFADVRSTLEGCADVERILARVALGTARPRDLTGLRDALERLPQLQILLGQLNSHRLQALGVELDEHPQTVDLLQRAIIDTPPATVRDGGVIADGFDGELDELRSMSRNADDYLAALEAEERAATGIPTLKVGFNRVHGYYIEVSRSQSGHMPERYTRRQTLKAAERFITPELKRFEEQVLSARERALAREKALYEQLVADLASELTPLQRSASALAELDALAAFAERARSLDYVQPELADTPGVRIEGGRHPVVEQALDAPFVPNDVRLDNRRRMLLITGPNMGGKSTYMRQTALIALLAYAGAFVPAQRAVLGPIDRIFTRIGAADDLASGRSTFMVEMTETANILHNATAESLVLMDEIGRGTSTFDGLALAWATAERLATRIRAFTLFATHYFEMTALEQIHPGVVNVHLEAAEHGERIVFLHAVRDGPANQSYGLQVAALAGVPQEVLKAAREKLRSLESGDGGDTGSAQLPLFGPEPVFPPPAQPEPEPDPIREAVENLDPDGLTPRDALETIYWLKAQCKE.

621 to 628 contributes to the ATP binding site; the sequence is GPNMGGKS. The segment at 803 to 852 is disordered; that stretch reads LESGDGGDTGSAQLPLFGPEPVFPPPAQPEPEPDPIREAVENLDPDGLTP. The segment covering 823-832 has biased composition (pro residues); the sequence is PVFPPPAQPE.

The protein belongs to the DNA mismatch repair MutS family.

Its function is as follows. This protein is involved in the repair of mismatches in DNA. It is possible that it carries out the mismatch recognition step. This protein has a weak ATPase activity. The chain is DNA mismatch repair protein MutS from Halorhodospira halophila (strain DSM 244 / SL1) (Ectothiorhodospira halophila (strain DSM 244 / SL1)).